The sequence spans 181 residues: CASP-like protein 2C1 (181 aa).

The Cytoplasmic portion of the chain corresponds to 1–7 (MALEIPK). A helical membrane pass occupies residues 8-28 (IEAILRGIAILLLVSTACLVG). Over 29-49 (LDSQTKFVIVYEKEVTYKDLH) the chain is Extracellular. The helical transmembrane segment at 50–70 (ALVVLVYVDAVAAAYNLLQLC) threads the bilayer. The Cytoplasmic segment spans residues 71–98 (RCSVSALSKGNFKGSYRYLSWACFVLDQ). Residues 99-119 (LAAYTTFAAHSAALQHSVLGI) form a helical membrane-spanning segment. At 120-140 (TGAKVFQWMKWCNRFTRFCFQ) the chain is on the extracellular side. A helical transmembrane segment spans residues 141–161 (IGGALTCGYIASVLMVMISFI). Topologically, residues 162–181 (SAFNLFRLYSPKHFLRLKGT) are cytoplasmic.

The protein belongs to the Casparian strip membrane proteins (CASP) family. Homodimer and heterodimers.

The protein localises to the cell membrane. The protein is CASP-like protein 2C1 of Populus trichocarpa (Western balsam poplar).